Reading from the N-terminus, the 327-residue chain is Small ribosomal subunit protein uS2 (327 aa).

The interval 258 to 327 (AGHTPVSETL…PGVADGAALE (70 aa)) is disordered.

Belongs to the universal ribosomal protein uS2 family.

The sequence is that of Small ribosomal subunit protein uS2 from Anaplasma marginale (strain St. Maries).